A 546-amino-acid polypeptide reads, in one-letter code: Cytochrome P450 monooxygenase gloP (546 aa).

The chain crosses the membrane as a helical span at residues 17-37 (TLSGGILTFLFIVVIAHFVLT). N-linked (GlcNAc...) asparagine glycosylation is found at Asn189, Asn413, and Asn416. Cys492 serves as a coordination point for heme.

Belongs to the cytochrome P450 family. Heme serves as cofactor.

The protein localises to the membrane. Its pathway is mycotoxin biosynthesis. Cytochrome P450 monooxygenase; part of the gene cluster that mediates the biosynthesis of pneumocandins, lipohexapeptides of the echinocandin family that prevent fungal cell wall formation by non-competitive inhibition of beta-1,3-glucan synthase. The 10,12-dimethylmyristoyl side chain is synthesized by the reducing polyketide synthase gloL/GLPKS4. The thioesterase gloN/GLHYD exclusively interacts with gloL/GLPKS4 to maintain turnover of the polyketide side chain. The 10R,12S-dimethylmyristic acid is then transferred to the first thiolation domain of the nonribosomal peptide synthetase gloA/GLNRPS4 by the acyl-AMP ligase gloD/GLligase, followed by its acylation to L-ornithine to trigger elongation of the cyclic hexapeptide. L-ornithine, 4R-hydroxyl-L-proline (generated from L-proline by the dioxygenase gloF/GLOXY2), 3S-hydroxyl-L-homotyrosine (generated by gloG/GLHtyB, gloH/GLHtyA, gloI/GLHtyC, gloJ/GLHtyD and hydroxylated at C-3 by the dioxygenase gloM/GLOXY1), 3R-hydroxyl-L-glutamine (generated from L-glutamine probably by the dioxygenase gloE/GLOXY3) and 3S-hydroxyl-L-proline (generated from L-proline by the dioxygenase gloF/GLOXY2 to yield pneumocandin B0), or 3S-hydroxyl-4S-methyl-L-proline (generated from L-leucine by the dioxygenase gloC/GLOXY4 to yield pneumocandin A0) are sequentially added to the growing chain. The last C domain of gloA/GLNRPS4 is proposed to be responsible for cyclization by condensation to form the peptide bond between L-ornithine and 3S-hydroxyl-4S-methyl-L-proline (for pneumocandin A0) or 3S-hydroxyl-L-proline (for pneumocandin B0). Finally, the subsequent C-4 hydroxylation of 3S-hydroxyl-L-homotyrosine and L-ornithine dihydroxylation at C-4 and C-5 are performed by the cytochrome P450 monooxygenases gloP/GLP450-1 and gloO/GLP450-2, respectively. This Glarea lozoyensis (strain ATCC 20868 / MF5171) protein is Cytochrome P450 monooxygenase gloP.